The following is a 185-amino-acid chain: Segregation and condensation protein B (185 aa).

Belongs to the ScpB family. Homodimer. Homodimerization may be required to stabilize the binding of ScpA to the Smc head domains. Component of a cohesin-like complex composed of ScpA, ScpB and the Smc homodimer, in which ScpA and ScpB bind to the head domain of Smc. The presence of the three proteins is required for the association of the complex with DNA.

Its subcellular location is the cytoplasm. In terms of biological role, participates in chromosomal partition during cell division. May act via the formation of a condensin-like complex containing Smc and ScpA that pull DNA away from mid-cell into both cell halves. The chain is Segregation and condensation protein B from Alkaliphilus oremlandii (strain OhILAs) (Clostridium oremlandii (strain OhILAs)).